A 442-amino-acid polypeptide reads, in one-letter code: CAAX prenyl protease 1 homolog (442 aa).

At 1-62 (MDASCLFKAL…KARDYKIDNH (62 aa)) the chain is on the lumenal side. A helical transmembrane segment spans residues 63–83 (LFGFFHSWFNQLLLTAQLIGG). Tyr-84 is a topological domain (cytoplasmic). Residues 85 to 105 (YPFLWYATASYPLHVAVFLSI) traverse the membrane as a helical segment. Topologically, residues 106–146 (NSIIETIIDLPWDLYSTFIIEDAHGFNKQTIGFYFVDKIKK) are lumenal. The helical transmembrane segment at 147 to 167 (MLVGFALTMPIVYGIEWIIVN) threads the bilayer. The Cytoplasmic portion of the chain corresponds to 168-170 (GGP). The chain crosses the membrane as a helical span at residues 171-191 (YFFVYIWLFVSVVVLLLMTIY). Residues 192–311 (PTFIAPLFDK…ELGHWALWHT (120 aa)) lie on the Lumenal side of the membrane. His-301 contacts Zn(2+). Glu-302 is a catalytic residue. Position 305 (His-305) interacts with Zn(2+). Residues 312–332 (LINLVITEVNLFFSFAVFGYF) traverse the membrane as a helical segment. At 333–349 (YKWEALYQGFGYHDTPP) the chain is on the cytoplasmic side. The helical transmembrane segment at 350-370 (VIGMMLIFQFVLALYNQLASI) threads the bilayer. Residues 371-442 (GMVIHSRSAE…AVRAFQAKNK (72 aa)) are Lumenal-facing. Glu-380 contributes to the Zn(2+) binding site. The Proton donor role is filled by Asp-384.

Belongs to the peptidase M48A family. Zn(2+) is required as a cofactor.

Its subcellular location is the endoplasmic reticulum membrane. The protein localises to the membrane. It carries out the reaction Hydrolyzes the peptide bond -P2-(S-farnesyl or geranylgeranyl)C-P1'-P2'-P3'-COOH where P1' and P2' are amino acids with aliphatic side chains and P3' is any C-terminal residue.. Its function is as follows. Proteolytically removes the C-terminal three residues of farnesylated proteins. The sequence is that of CAAX prenyl protease 1 homolog from Caenorhabditis elegans.